Here is a 264-residue protein sequence, read N- to C-terminus: Thymidylate synthase (264 aa).

Arg21 provides a ligand contact to dUMP. His51 contributes to the (6R)-5,10-methylene-5,6,7,8-tetrahydrofolate binding site. Residue 126–127 participates in dUMP binding; that stretch reads RR. Cys146 (nucleophile) is an active-site residue. DUMP-binding positions include 166-169, Asn177, and 207-209; these read RSVD and HLY. Asp169 provides a ligand contact to (6R)-5,10-methylene-5,6,7,8-tetrahydrofolate. Position 263 (Ser263) interacts with (6R)-5,10-methylene-5,6,7,8-tetrahydrofolate.

Belongs to the thymidylate synthase family. Bacterial-type ThyA subfamily. In terms of assembly, homodimer.

Its subcellular location is the cytoplasm. The catalysed reaction is dUMP + (6R)-5,10-methylene-5,6,7,8-tetrahydrofolate = 7,8-dihydrofolate + dTMP. Its pathway is pyrimidine metabolism; dTTP biosynthesis. Catalyzes the reductive methylation of 2'-deoxyuridine-5'-monophosphate (dUMP) to 2'-deoxythymidine-5'-monophosphate (dTMP) while utilizing 5,10-methylenetetrahydrofolate (mTHF) as the methyl donor and reductant in the reaction, yielding dihydrofolate (DHF) as a by-product. This enzymatic reaction provides an intracellular de novo source of dTMP, an essential precursor for DNA biosynthesis. The protein is Thymidylate synthase of Anoxybacillus flavithermus (strain DSM 21510 / WK1).